Here is a 466-residue protein sequence, read N- to C-terminus: Hydroxyproline dehydrogenase (466 aa).

Belongs to the proline oxidase family. It depends on FAD as a cofactor.

It carries out the reaction trans-4-hydroxy-L-proline + a quinone = (3R,5S)-1-pyrroline-3-hydroxy-5-carboxylate + a quinol + H(+). The enzyme catalyses L-proline + a quinone = (S)-1-pyrroline-5-carboxylate + a quinol + H(+). Its pathway is amino-acid degradation; L-proline degradation into L-glutamate; L-glutamate from L-proline: step 1/2. Its function is as follows. Dehydrogenase that converts trans-4-L-hydroxyproline to delta-1-pyrroline-3-hydroxy-5-carboxylate (Hyp) using a quinone as the terminal electron acceptor. Can also use proline as a substrate but with a very much lower efficiency. Does not react with other diastereomers of Hyp: trans-4-D-hydroxyproline and cis-4-L-hydroxyproline. The protein is Hydroxyproline dehydrogenase (prodh2) of Xenopus laevis (African clawed frog).